Reading from the N-terminus, the 97-residue chain is Large ribosomal subunit protein bL28 (97 aa).

Belongs to the bacterial ribosomal protein bL28 family.

The protein is Large ribosomal subunit protein bL28 of Bartonella quintana (strain Toulouse) (Rochalimaea quintana).